The primary structure comprises 525 residues: Mitochondrial-processing peptidase subunit alpha (525 aa).

A mitochondrion-targeting transit peptide spans 1-33 (MAAVVLAATRLLRGSGSWGCSRLRFGPPAYRRF). Residue Lys-64 is modified to N6-succinyllysine. Lys-299 bears the N6-acetyllysine mark.

The protein belongs to the peptidase M16 family. In terms of assembly, heterodimer of PMPCA (alpha) and PMPCB (beta) subunits, forming the mitochondrial processing protease (MPP) in which PMPCA is involved in substrate recognition and binding and PMPCB is the catalytic subunit. Ubiquitously expressed with highest expression in fetal tissues and adult brain, cerebellum and cerebellar vermis.

The protein resides in the mitochondrion matrix. It localises to the mitochondrion inner membrane. Its function is as follows. Substrate recognition and binding subunit of the essential mitochondrial processing protease (MPP), which cleaves the mitochondrial sequence off newly imported precursors proteins. The polypeptide is Mitochondrial-processing peptidase subunit alpha (PMPCA) (Homo sapiens (Human)).